A 1043-amino-acid polypeptide reads, in one-letter code: NACHT, LRR and PYD domains-containing protein 13 (1043 aa).

Residues 1–107 (MNFSVITCPN…CEKVRAEMKE (107 aa)) form the Pyrin domain. One can recognise an NACHT domain in the interval 229-558 (QTIVLVGRAG…VLEEPREFPP (330 aa)). 235 to 242 (GRAGVGKT) is a binding site for ATP. LRR repeat units follow at residues 725 to 749 (NENL…LCLA), 781 to 804 (NSKL…ILKA), 837 to 864 (IQHV…ALTH), 894 to 917 (NRSL…FLCE), 923 to 946 (DGNL…ELAN), 951 to 978 (NHNV…ALKP), and 1007 to 1030 (SKSL…MLCK).

It belongs to the NLRP family.

Involved in inflammation. This chain is NACHT, LRR and PYD domains-containing protein 13 (NLRP13), found in Homo sapiens (Human).